The following is a 236-amino-acid chain: LexA repressor (236 aa).

Positions 1–25 are disordered; that stretch reads MNDSNDTSVAGGAAGADSRVLSADS. Positions 51–71 form a DNA-binding region, H-T-H motif; it reads IREIGDAVGLTSTSSVAHQLR. Residues Ser160 and Lys197 each act as for autocatalytic cleavage activity in the active site.

This sequence belongs to the peptidase S24 family. In terms of assembly, homodimer.

It catalyses the reaction Hydrolysis of Ala-|-Gly bond in repressor LexA.. Its function is as follows. Represses a number of genes involved in the response to DNA damage (SOS response), including recA and lexA. In the presence of single-stranded DNA, RecA interacts with LexA causing an autocatalytic cleavage which disrupts the DNA-binding part of LexA, leading to derepression of the SOS regulon and eventually DNA repair. This is LexA repressor from Mycobacterium bovis (strain BCG / Pasteur 1173P2).